Reading from the N-terminus, the 204-residue chain is Putative 3-methyladenine DNA glycosylase (204 aa).

Belongs to the DNA glycosylase MPG family.

This chain is Putative 3-methyladenine DNA glycosylase, found in Mycobacterium sp. (strain KMS).